Consider the following 699-residue polypeptide: D-(-)-3-hydroxybutyrate oligomer hydrolase (699 aa).

The first 33 residues, 1 to 33 (MTAIRGGSRRAPGLALALLGGVLLGACHGDENA), serve as a signal peptide directing secretion. Residue serine 311 is the Charge relay system of the active site.

Belongs to the D-(-)-3-hydroxybutyrate oligomer hydrolase family.

Its subcellular location is the secreted. The catalysed reaction is (3R)-hydroxybutanoate dimer + H2O = 2 (R)-3-hydroxybutanoate + H(+). Its pathway is lipid metabolism; butanoate metabolism. Participates in the degradation of poly-3-hydroxybutyrate (PHB). It works downstream of poly(3-hydroxybutyrate) depolymerase, hydrolyzing D(-)-3-hydroxybutyrate oligomers of various length (3HB-oligomers) into 3HB-monomers. This Burkholderia mallei (strain NCTC 10247) protein is D-(-)-3-hydroxybutyrate oligomer hydrolase.